A 308-amino-acid polypeptide reads, in one-letter code: MQIEVKNISKVFEPKSPIEFTALKGVSLSFEQGEFISIIGPTGSGKTTFIEHLNALNLPSIGSIVIKGKFKDQKDKKNPVLIESEVILQKTKRKIKQIKEIRRQIGIVFQFAEYQLFESTIEKDIAFGPISLGISKEEAYKRAKKYISIVGLPENYLQRSPFELSGGQKRRVALAGILAMDPDFLIFDEPTAGLDPQGSKEILEIFGKLNSEGKTVIIVTHNLDHALEWTNRTIFFNDGFVIKDGKTYDVLEDVDFLRENEMEPPKLLVLKKLLQDKGINLSKVRSIEDFAREINQYLETKNKTKENN.

Positions 3-263 (IEVKNISKVF…VDFLRENEME (261 aa)) constitute an ABC transporter domain. Residue 40 to 47 (GPTGSGKT) participates in ATP binding.

The protein belongs to the ABC transporter superfamily. Energy-coupling factor EcfA family. In terms of assembly, forms a stable energy-coupling factor (ECF) transporter complex composed of 2 membrane-embedded substrate-binding proteins (S component), 2 ATP-binding proteins (A component) and 2 transmembrane proteins (T component).

It localises to the cell membrane. In terms of biological role, ATP-binding (A) component of a common energy-coupling factor (ECF) ABC-transporter complex. Unlike classic ABC transporters this ECF transporter provides the energy necessary to transport a number of different substrates. In Mycoplasma mobile (strain ATCC 43663 / 163K / NCTC 11711) (Mesomycoplasma mobile), this protein is Energy-coupling factor transporter ATP-binding protein EcfA2.